We begin with the raw amino-acid sequence, 222 residues long: UPF0502 protein XAC4278 (222 aa).

The protein belongs to the UPF0502 family.

The protein is UPF0502 protein XAC4278 of Xanthomonas axonopodis pv. citri (strain 306).